We begin with the raw amino-acid sequence, 130 residues long: Small ribosomal subunit protein uS8 (130 aa).

The protein belongs to the universal ribosomal protein uS8 family. Part of the 30S ribosomal subunit. Contacts proteins S5 and S12.

In terms of biological role, one of the primary rRNA binding proteins, it binds directly to 16S rRNA central domain where it helps coordinate assembly of the platform of the 30S subunit. This is Small ribosomal subunit protein uS8 from Teredinibacter turnerae (strain ATCC 39867 / T7901).